The chain runs to 302 residues: Ribosomal protein L11 methyltransferase (302 aa).

4 residues coordinate S-adenosyl-L-methionine: T155, G176, D198, and N239.

It belongs to the methyltransferase superfamily. PrmA family.

The protein resides in the cytoplasm. The catalysed reaction is L-lysyl-[protein] + 3 S-adenosyl-L-methionine = N(6),N(6),N(6)-trimethyl-L-lysyl-[protein] + 3 S-adenosyl-L-homocysteine + 3 H(+). Methylates ribosomal protein L11. This chain is Ribosomal protein L11 methyltransferase, found in Caldicellulosiruptor saccharolyticus (strain ATCC 43494 / DSM 8903 / Tp8T 6331).